We begin with the raw amino-acid sequence, 318 residues long: Basic leucine zipper (bZIP) transcription factor atfB (318 aa).

The interval 114-157 (FNSSPPEYAPPKHRSSLSEQSQTDGYGVSTRRRKASAIDQCEQQ) is disordered. A basic motif region spans residues 160–199 (REKREKFLERNRLAASKCRQKKKEHTKLLETRFREVSNKK). The bZIP domain maps to 160-223 (REKREKFLER…LNLKNEMLRH (64 aa)). Residues 202 to 216 (LESEIEHLRSEVLNL) form a leucine-zipper region. Residues 275 to 301 (DGPMQLPSEMGSPLDQRRDSEQSIMTE) form a disordered region.

Belongs to the bZIP family. ATF subfamily.

Its subcellular location is the nucleus. Transcription factor that acts as a key player in the regulatory circuit that integrates secondary metabolism and cellular response to oxidative stress. Regulates the genes involved in development and stress response through direct binding to their promoters. The sequence is that of Basic leucine zipper (bZIP) transcription factor atfB from Aspergillus flavus (strain ATCC 200026 / FGSC A1120 / IAM 13836 / NRRL 3357 / JCM 12722 / SRRC 167).